Reading from the N-terminus, the 354-residue chain is Protein Wnt-11 (354 aa).

The N-terminal stretch at 1–24 is a signal peptide; it reads MKPSPQFFLAAFLSLILQTGICYG. N-linked (GlcNAc...) asparagine glycans are attached at residues Asn-40 and Asn-90. Intrachain disulfides connect Cys-80-Cys-91, Cys-130-Cys-138, Cys-140-Cys-157, Cys-209-Cys-223, Cys-211-Cys-218, Cys-283-Cys-314, Cys-299-Cys-309, Cys-313-Cys-353, Cys-329-Cys-344, Cys-331-Cys-341, and Cys-336-Cys-337. The O-palmitoleoyl serine; by PORCN moiety is linked to residue Ser-215. Asn-300 and Asn-304 each carry an N-linked (GlcNAc...) asparagine glycan.

This sequence belongs to the Wnt family. Post-translationally, palmitoleoylation is required for efficient binding to frizzled receptors. Depalmitoleoylation leads to Wnt signaling pathway inhibition. Expressed in the dermatome. The expression domain is mutually exclusive to the other Wnt genes.

The protein resides in the secreted. The protein localises to the extracellular space. It localises to the extracellular matrix. Its function is as follows. Ligand for members of the frizzled family of seven transmembrane receptors. May play a role in the formation of dermal structure, both limb and feather buds. Is likely to signal over only few cell diameters. This chain is Protein Wnt-11 (WNT11), found in Gallus gallus (Chicken).